Reading from the N-terminus, the 361-residue chain is Phospho-N-acetylmuramoyl-pentapeptide-transferase (361 aa).

10 helical membrane passes run 25-45, 73-93, 98-118, 139-159, 168-188, 200-220, 237-257, 264-284, 289-309, and 339-359; these read RGILAALTALFLSLWMGPAVI, TMGGSLILLTVTLSVLLWGDL, VWLVLAVMICFGAIGWYDDWI, IFGLAAGLFLYYTADVPAAIT, IALPLAGVSFVVIAYFWIVGF, GLAIMPTVLVACALGVFAYAS, AGELIIICSAIAGAGLGFLWF, VFMGDIGALSLGAVLGTVAVI, LVLVIMGGVFVIETLSVMIQV, and VIVRFWIISVVLVLIGLATLK.

Belongs to the glycosyltransferase 4 family. MraY subfamily. The cofactor is Mg(2+).

It is found in the cell inner membrane. The enzyme catalyses UDP-N-acetyl-alpha-D-muramoyl-L-alanyl-gamma-D-glutamyl-meso-2,6-diaminopimeloyl-D-alanyl-D-alanine + di-trans,octa-cis-undecaprenyl phosphate = di-trans,octa-cis-undecaprenyl diphospho-N-acetyl-alpha-D-muramoyl-L-alanyl-D-glutamyl-meso-2,6-diaminopimeloyl-D-alanyl-D-alanine + UMP. The protein operates within cell wall biogenesis; peptidoglycan biosynthesis. Its function is as follows. Catalyzes the initial step of the lipid cycle reactions in the biosynthesis of the cell wall peptidoglycan: transfers peptidoglycan precursor phospho-MurNAc-pentapeptide from UDP-MurNAc-pentapeptide onto the lipid carrier undecaprenyl phosphate, yielding undecaprenyl-pyrophosphoryl-MurNAc-pentapeptide, known as lipid I. This Xanthomonas campestris pv. campestris (strain 8004) protein is Phospho-N-acetylmuramoyl-pentapeptide-transferase.